A 537-amino-acid chain; its full sequence is Zinc finger protein 835 (537 aa).

The disordered stretch occupies residues 12 to 109 (AELEGNWKHE…RERGGGPKKP (98 aa)). Residues 63–77 (TISSPAATQASVPDD) are compositionally biased toward polar residues. Basic and acidic residues predominate over residues 89-104 (SPKERHPDSRQRERGG). 14 consecutive C2H2-type zinc fingers follow at residues 110-132 (WKCGDCGKAFSYCSAFILHQRIH), 138-160 (FACPECGKAFSQSVHLTLHQRTH), 166-188 (YACHECGKAFSQGSYLASHWRTH), 194-216 (HRCADCGKAFTRVTHLTQHRRVH), 222-244 (YACAQCAKAFRNRSSLIEHQRIH), 250-272 (YECSACAKAFRFSSALIRHQRIH), 278-300 (YRCGQCAKAFAQIAHLTQHRRVH), 306-328 (YTCQDCGALFSQSASLAEHRRIH), 334-356 (YACGQCAKAFTQVSHLTQHQRTH), 362-384 (YPCHDCGKRFSNRSHLLQHRLVH), 390-412 (YRCLQCGAAFSHVSSLIEHQKIH), 418-440 (YKCGECGKAFSQGSSLALHQRTH), 446-468 (YTCPECGKAFSNRSYLIQHHIVH), and 474-496 (YECSGCGKAFSFSSALIRHQRTH). The tract at residues 497 to 537 (ADSSGRLCPAPTPDSTPGLSQGGETCQQGCPGRNPRGPAED) is disordered. Residues 509 to 524 (PDSTPGLSQGGETCQQ) are compositionally biased toward polar residues.

This sequence belongs to the krueppel C2H2-type zinc-finger protein family.

The protein localises to the nucleus. Its function is as follows. May be involved in transcriptional regulation. In Homo sapiens (Human), this protein is Zinc finger protein 835 (ZNF835).